Reading from the N-terminus, the 313-residue chain is UPF0761 membrane protein VV1_0885 (313 aa).

The next 6 helical transmembrane spans lie at 41 to 61, 104 to 124, 139 to 159, 185 to 205, 215 to 235, and 249 to 269; these read YLAYITLLSIVPMLTVLLSIL, MTAVGAAFLFVAALMLISNID, AVFSFSMYWMVLTLGPILVGA, LLRWLPFILSSSAFVGLYLLV, AVVGAMIAAVLFELSKKGFAA, and ALAAIPILFVWVYLCWLIVLI. The interval 294 to 313 is disordered; sequence PNNDTELEKDTQRDRFDSES. Positions 299–313 are enriched in basic and acidic residues; sequence ELEKDTQRDRFDSES.

This sequence belongs to the UPF0761 family.

It is found in the cell inner membrane. The sequence is that of UPF0761 membrane protein VV1_0885 from Vibrio vulnificus (strain CMCP6).